A 249-amino-acid chain; its full sequence is Inner membrane protein pE248R (249 aa).

The N-myristoyl glycine; by host moiety is linked to residue glycine 2. Topologically, residues 2–199 (GGSTSKNSFK…ADAISAVFKN (198 aa)) are cytoplasmic. Residues 200–220 (IMVAAVVIVVIIVGFIAVFYF) form a helical membrane-spanning segment. Residues 221-249 (LHSRHRHEEEEEAEPLITSKILKNAAVSQ) lie on the Extracellular side of the membrane.

It belongs to the asfivirus E248R family. Interacts with A151R.

It localises to the host membrane. The protein resides in the virion membrane. Functionally, essential for viral fusion with host endosomal membrane and core release. The protein is Inner membrane protein pE248R of African swine fever virus (isolate Pig/Kenya/KEN-50/1950) (ASFV).